A 329-amino-acid chain; its full sequence is Protein-arginine N-acetylglucosaminyltransferase NleB (329 aa).

Residue Arg13 is glycosylated (N-beta-linked (GlcNAc) arginine; by autocatalysis). Residue 48 to 50 coordinates UDP-N-acetyl-alpha-D-glucosamine; that stretch reads QWF. Arg53 carries an N-beta-linked (GlcNAc) arginine; by autocatalysis glycan. Position 72 (Tyr72) interacts with UDP-N-acetyl-alpha-D-glucosamine. The N-beta-linked (GlcNAc) arginine; by autocatalysis glycan is linked to Arg159. 219-222 contacts UDP-N-acetyl-alpha-D-glucosamine; sequence YLDA. The short motif at 221 to 223 is the DXD motif element; the sequence is DAD. Asp223 serves as a coordination point for Mn(2+). Glu253 functions as the Proton acceptor in the catalytic mechanism. Arg293 is a glycosylation site (N-beta-linked (GlcNAc) arginine; by autocatalysis). Positions 320 and 322 each coordinate Mn(2+). UDP-N-acetyl-alpha-D-glucosamine contacts are provided by residues Ser322 and 327-329; that span reads SSW.

Belongs to the glycosyltransferase NleB family. It depends on Mn(2+) as a cofactor. Post-translationally, auto-glycosylated: arginine GlcNAcylation is required for activity toward death domain-containing host target proteins.

It is found in the secreted. The protein resides in the host cell. The catalysed reaction is L-arginyl-[protein] + UDP-N-acetyl-alpha-D-glucosamine = N(omega)-(N-acetyl-beta-D-glucosaminyl)-L-arginyl-[protein] + UDP + H(+). Functionally, protein-arginine N-acetylglucosaminyltransferase effector that disrupts TNF signaling in infected cells, including NF-kappa-B signaling, apoptosis and necroptosis. Acts by catalyzing the transfer of a single N-acetylglucosamine (GlcNAc) to a conserved arginine residue in the death domain of host proteins FADD, TNFRSF1A and RIPK1: arginine GlcNAcylation prevents homotypic/heterotypic death domain interactions and assembly of the oligomeric TNF-alpha receptor complex, thereby disrupting TNF signaling. Has preference for host FADD as substrate compared to TNFRSF1A and RIPK1. Also acts on host proteins without a death domain: catalyzes GlcNAcylation of host GAPDH protein, thereby preventing GAPDH interaction with TRAF2 and TRAF3, leading to inhibit NF-kappa-B signaling and type I interferon production, respectively. Also displays intra-bacterial activity by mediating GlcNAcylation of glutathione synthetase GshB. Catalyzes auto-GlcNAcylation, which is required for activity toward death domain-containing host target proteins. This Citrobacter rodentium protein is Protein-arginine N-acetylglucosaminyltransferase NleB.